The sequence spans 413 residues: Aspartate aminotransferase, cytoplasmic (413 aa).

Residues glycine 39 and tryptophan 141 each contribute to the L-aspartate site. Serine 149 carries the phosphoserine modification. Residue asparagine 195 participates in L-aspartate binding. Lysine 259 bears the N6-(pyridoxal phosphate)lysine mark. Arginine 387 serves as a coordination point for L-aspartate.

The protein belongs to the class-I pyridoxal-phosphate-dependent aminotransferase family. In terms of assembly, homodimer. The cofactor is pyridoxal 5'-phosphate.

It localises to the cytoplasm. The catalysed reaction is L-aspartate + 2-oxoglutarate = oxaloacetate + L-glutamate. The enzyme catalyses L-cysteine + 2-oxoglutarate = 2-oxo-3-sulfanylpropanoate + L-glutamate. It catalyses the reaction (2S)-2-aminobutanoate + 2-oxoglutarate = 2-oxobutanoate + L-glutamate. It carries out the reaction 3-sulfino-L-alanine + 2-oxoglutarate = 3-sulfinopyruvate + L-glutamate. Its function is as follows. Biosynthesis of L-glutamate from L-aspartate or L-cysteine. Important regulator of levels of glutamate, the major excitatory neurotransmitter of the vertebrate central nervous system. Acts as a scavenger of glutamate in brain neuroprotection. The aspartate aminotransferase activity is involved in hepatic glucose synthesis during development and in adipocyte glyceroneogenesis. Using L-cysteine as substrate, regulates levels of mercaptopyruvate, an important source of hydrogen sulfide. Mercaptopyruvate is converted into H(2)S via the action of 3-mercaptopyruvate sulfurtransferase (3MST). Hydrogen sulfide is an important synaptic modulator and neuroprotectant in the brain. This is Aspartate aminotransferase, cytoplasmic from Macaca fascicularis (Crab-eating macaque).